Consider the following 332-residue polypeptide: Protein EXORDIUM-like 6 (332 aa).

Residues 1-27 (MAMASASSSSSSISVIIFLLLAPLCLS) form the signal peptide. Residues asparagine 36, asparagine 102, and asparagine 143 are each glycosylated (N-linked (GlcNAc...) asparagine).

The protein belongs to the EXORDIUM family.

It is found in the secreted. Its subcellular location is the extracellular space. The protein localises to the apoplast. Its function is as follows. May play a role in a brassinosteroid-dependent regulation of growth and development. The protein is Protein EXORDIUM-like 6 (EXL6) of Arabidopsis thaliana (Mouse-ear cress).